A 370-amino-acid chain; its full sequence is DNA replication and repair protein RecF (370 aa).

ATP is bound at residue 30–37; that stretch reads GQNGMGKT.

It belongs to the RecF family.

The protein localises to the cytoplasm. Its function is as follows. The RecF protein is involved in DNA metabolism; it is required for DNA replication and normal SOS inducibility. RecF binds preferentially to single-stranded, linear DNA. It also seems to bind ATP. This Bacteroides fragilis (strain ATCC 25285 / DSM 2151 / CCUG 4856 / JCM 11019 / LMG 10263 / NCTC 9343 / Onslow / VPI 2553 / EN-2) protein is DNA replication and repair protein RecF.